The following is a 371-amino-acid chain: Hsc70-interacting protein (371 aa).

The tract at residues 38–80 (MGGKVPPATHKAKSEENTKEEKRDKTTEENIKTEELSSEESDL) is disordered. The span at 49-72 (AKSEENTKEEKRDKTTEENIKTEE) shows a compositional bias: basic and acidic residues. TPR repeat units lie at residues 113–146 (ANEK…NPRL), 147–180 (AILY…NPDS), and 181–214 (AQPY…DYDE). The span at 255–271 (KAREEHERAQREEEARR) shows a compositional bias: basic and acidic residues. The segment at 255-296 (KAREEHERAQREEEARRQSGSQYGSFPGGFPGGMPGNFPGGM) is disordered. Residues 280–296 (FPGGFPGGMPGNFPGGM) show a composition bias toward gly residues. One can recognise an STI1 domain in the interval 321-360 (DPEVLAAMQDPEVMVAFQDVAQNPSNMSKYQSNPKVMNLI). Serine 348 is modified (phosphoserine; by GRK5). N6-acetyllysine is present on residues lysine 355 and lysine 362.

Belongs to the FAM10 family. Homotetramer. Interacts with HSC70 as well as DNAJ homologs and HSP90. Interacts (via the C-terminus 302- 318 AA) with GRK5.

It localises to the cytoplasm. Functionally, one HIP oligomer binds the ATPase domains of at least two HSC70 molecules dependent on activation of the HSC70 ATPase by HSP40. Stabilizes the ADP state of HSC70 that has a high affinity for substrate protein. Through its own chaperone activity, it may contribute to the interaction of HSC70 with various target proteins. The polypeptide is Hsc70-interacting protein (St13) (Mus musculus (Mouse)).